The sequence spans 170 residues: Small ribosomal subunit protein uS9 (170 aa).

The protein belongs to the universal ribosomal protein uS9 family.

This is Small ribosomal subunit protein uS9 from Rhodococcus opacus (strain B4).